Reading from the N-terminus, the 157-residue chain is SsrA-binding protein (157 aa).

A disordered region spans residues 126-157 (GLGKGKQAHDKREAVKERDWQRDRARLMRDRG). Residues 132 to 157 (QAHDKREAVKERDWQRDRARLMRDRG) are compositionally biased toward basic and acidic residues.

The protein belongs to the SmpB family.

The protein resides in the cytoplasm. Functionally, required for rescue of stalled ribosomes mediated by trans-translation. Binds to transfer-messenger RNA (tmRNA), required for stable association of tmRNA with ribosomes. tmRNA and SmpB together mimic tRNA shape, replacing the anticodon stem-loop with SmpB. tmRNA is encoded by the ssrA gene; the 2 termini fold to resemble tRNA(Ala) and it encodes a 'tag peptide', a short internal open reading frame. During trans-translation Ala-aminoacylated tmRNA acts like a tRNA, entering the A-site of stalled ribosomes, displacing the stalled mRNA. The ribosome then switches to translate the ORF on the tmRNA; the nascent peptide is terminated with the 'tag peptide' encoded by the tmRNA and targeted for degradation. The ribosome is freed to recommence translation, which seems to be the essential function of trans-translation. This is SsrA-binding protein from Methylobacterium radiotolerans (strain ATCC 27329 / DSM 1819 / JCM 2831 / NBRC 15690 / NCIMB 10815 / 0-1).